A 1273-amino-acid chain; its full sequence is Clustered mitochondria protein homolog (1273 aa).

The Clu domain maps to Pro344–Ala599. TPR repeat units lie at residues Ser981 to Val1013, Ala1022 to Val1055, and Ala1151 to Glu1184. Disordered regions lie at residues Ala1217–Leu1242 and Ile1254–Lys1273. The segment covering Ser1262–Lys1273 has biased composition (basic residues).

It belongs to the CLU family. As to quaternary structure, may associate with the eukaryotic translation initiation factor 3 (eIF-3) complex.

The protein localises to the cytoplasm. In terms of biological role, mRNA-binding protein involved in proper cytoplasmic distribution of mitochondria. The chain is Clustered mitochondria protein homolog from Vanderwaltozyma polyspora (strain ATCC 22028 / DSM 70294 / BCRC 21397 / CBS 2163 / NBRC 10782 / NRRL Y-8283 / UCD 57-17) (Kluyveromyces polysporus).